A 437-amino-acid chain; its full sequence is Enolase (437 aa).

Gln-162 is a (2R)-2-phosphoglycerate binding site. The active-site Proton donor is Glu-204. Residues Asp-251, Glu-297, and Asp-324 each coordinate Mg(2+). The (2R)-2-phosphoglycerate site is built by Lys-349, Arg-378, Ser-379, and Lys-400. Lys-349 functions as the Proton acceptor in the catalytic mechanism.

Belongs to the enolase family. The cofactor is Mg(2+).

It is found in the cytoplasm. It localises to the secreted. Its subcellular location is the cell surface. It catalyses the reaction (2R)-2-phosphoglycerate = phosphoenolpyruvate + H2O. It participates in carbohydrate degradation; glycolysis; pyruvate from D-glyceraldehyde 3-phosphate: step 4/5. Functionally, catalyzes the reversible conversion of 2-phosphoglycerate (2-PG) into phosphoenolpyruvate (PEP). It is essential for the degradation of carbohydrates via glycolysis. The protein is Enolase of Pelodictyon phaeoclathratiforme (strain DSM 5477 / BU-1).